The following is a 151-amino-acid chain: Ribosomal RNA large subunit methyltransferase H (151 aa).

Residues leucine 70, glycine 99, and 118–123 (LSKLTF) contribute to the S-adenosyl-L-methionine site.

The protein belongs to the RNA methyltransferase RlmH family. In terms of assembly, homodimer.

It localises to the cytoplasm. It carries out the reaction pseudouridine(1915) in 23S rRNA + S-adenosyl-L-methionine = N(3)-methylpseudouridine(1915) in 23S rRNA + S-adenosyl-L-homocysteine + H(+). Functionally, specifically methylates the pseudouridine at position 1915 (m3Psi1915) in 23S rRNA. This is Ribosomal RNA large subunit methyltransferase H from Gloeobacter violaceus (strain ATCC 29082 / PCC 7421).